Reading from the N-terminus, the 283-residue chain is MEDENTTIIMASLSALSPSHLTNLTHSILSISHHHRRRLGAVLSSPTLFSLTLRHLLSLSLPDKTHLIANHLLSLLHPLLIHRKHHSSYAVTMKLRDLDAVVLLLFLCETHQLHPDVLEASADNWREILGNTYSNNMLSNNSGLWTCDAGILMPYIETLVRCKRFVDIMGGYNHLRRRDQKEGYQVPAARAAVVALRAVEVFNVAASNAGEVECVICKEEMSEGRDVCEMPCQHFFHWKCILPWLSKKNTCPFCRFQLPTDDVFSEIQRLWEILVKSSELHVA.

The N-terminal 32 residues, 1–32 (MEDENTTIIMASLSALSPSHLTNLTHSILSIS), are a transit peptide targeting the amyloplast. Residues 214–255 (CVICKEEMSEGRDVCEMPCQHFFHWKCILPWLSKKNTCPFCR) form an RING-type; atypical zinc finger.

In terms of processing, auto-ubiquitinated as part of the enzymatic reaction. As to expression, expressed in seedlings, hypocotyls, roots and stems. Present especially in hypocotyl and inflorescence endodermis, as well as in root cap columella, tissues that act as statocytes.

The protein localises to the plastid. It is found in the amyloplast. It carries out the reaction S-ubiquitinyl-[E2 ubiquitin-conjugating enzyme]-L-cysteine + [acceptor protein]-L-lysine = [E2 ubiquitin-conjugating enzyme]-L-cysteine + N(6)-ubiquitinyl-[acceptor protein]-L-lysine.. It participates in protein modification; protein ubiquitination. Its function is as follows. E3 ubiquitin-protein ligase which accepts ubiquitin from an E2 ubiquitin-conjugating enzyme in the form of a thioester and then directly transfers the ubiquitin to targeted substrates. Modulates amyloplast dynamics and sedimentation in statocytes during inflorescence, hypocotyl and root gravitropism, probably by regulating amyloplast interaction with actin filaments (AFs) in endodermal cells. In Arabidopsis thaliana (Mouse-ear cress), this protein is E3 ubiquitin-protein ligase SGR9, amyloplastic (SGR9).